A 528-amino-acid chain; its full sequence is Na(+)/H(+) antiporter NhaB (528 aa).

11 consecutive transmembrane segments (helical) span residues 23–43 (VAII…NPFV), 45–65 (GWLL…CYPL), 90–110 (LVAN…IYFM), 136–156 (CFAA…AVVI), 204–224 (LLMH…VGEP), 237–257 (FGEF…CGLI), 305–325 (GIIA…VGLI), 350–370 (EEAL…AVII), 392–412 (LALF…VFVG), 450–470 (ATPN…APLI), and 479–499 (VMAL…IMFF).

This sequence belongs to the NhaB Na(+)/H(+) (TC 2.A.34) antiporter family.

The protein localises to the cell inner membrane. The catalysed reaction is 2 Na(+)(in) + 3 H(+)(out) = 2 Na(+)(out) + 3 H(+)(in). Functionally, na(+)/H(+) antiporter that extrudes sodium in exchange for external protons. Can also transport lithium and potassium. The chain is Na(+)/H(+) antiporter NhaB from Vibrio parahaemolyticus serotype O3:K6 (strain RIMD 2210633).